The chain runs to 393 residues: Fasciculation and elongation protein zeta-1 (393 aa).

The segment at 1-41 (MEAPLVSLDEEFEDIRPCCTEDPEEKPQSLYGTSPHHLEDP) is disordered. The residue at position 58 (Ser58) is a Phosphoserine. The disordered stretch occupies residues 130-154 (NGNSSDTEIHEKEEEDEFIEKSEND). A coiled-coil region spans residues 231–299 (SELTELLDQV…KKRRKEKGLS (69 aa)). Residues Ser299 and Ser317 each carry the phosphoserine modification.

The protein belongs to the zygin family. Homodimer. Interacts with UBE4B and SAP30L. Interacts with SCOC and ULK1; SCOC interferes with ULK1-binding to FEZ1. Directly interacts with SCOC and UVRAG. Stabilizes the interaction between SCOC and UVRAG during amino acid starvation. Interacts with the NH2-terminal variable region (V1) of PKC zeta and weakly with that of PKC epsilon. In terms of processing, phosphorylated by protein kinase C zeta; which enhances interaction with UBE4B and polyubiquitination. Post-translationally, polyubiquitinated in a UBE4B-dependent manner; which does not lead to proteasomal degradation and may be important for neurogenic activity. Polyubiquitin linkage seems to be mainly through Lys-26. As to expression, brain.

It localises to the cytoplasm. The protein resides in the cytoskeleton. Its subcellular location is the microtubule organizing center. It is found in the centrosome. The protein localises to the cell membrane. May be involved in axonal outgrowth as component of the network of molecules that regulate cellular morphology and axon guidance machinery. May participate in the transport of mitochondria and other cargos along microtubules. This is Fasciculation and elongation protein zeta-1 (Fez1) from Rattus norvegicus (Rat).